We begin with the raw amino-acid sequence, 301 residues long: Acetylglutamate kinase (301 aa).

Substrate contacts are provided by residues 72-73 (GG), Arg94, and Asn199.

This sequence belongs to the acetylglutamate kinase family. ArgB subfamily.

The protein resides in the cytoplasm. It catalyses the reaction N-acetyl-L-glutamate + ATP = N-acetyl-L-glutamyl 5-phosphate + ADP. Its pathway is amino-acid biosynthesis; L-arginine biosynthesis; N(2)-acetyl-L-ornithine from L-glutamate: step 2/4. Catalyzes the ATP-dependent phosphorylation of N-acetyl-L-glutamate. The chain is Acetylglutamate kinase from Bartonella bacilliformis (strain ATCC 35685 / KC583 / Herrer 020/F12,63).